A 348-amino-acid chain; its full sequence is Dihydroorotase (348 aa).

Histidine 17 and histidine 19 together coordinate Zn(2+). Residues 19-21 and asparagine 45 contribute to the substrate site; that span reads HLR. 3 residues coordinate Zn(2+): lysine 103, histidine 140, and histidine 178. Lysine 103 carries the post-translational modification N6-carboxylysine. Histidine 140 contacts substrate. Leucine 223 lines the substrate pocket. Residue aspartate 251 coordinates Zn(2+). Residue aspartate 251 is part of the active site. 2 residues coordinate substrate: histidine 255 and alanine 267.

This sequence belongs to the metallo-dependent hydrolases superfamily. DHOase family. Class II DHOase subfamily. Homodimer. The cofactor is Zn(2+).

It carries out the reaction (S)-dihydroorotate + H2O = N-carbamoyl-L-aspartate + H(+). Its pathway is pyrimidine metabolism; UMP biosynthesis via de novo pathway; (S)-dihydroorotate from bicarbonate: step 3/3. Its function is as follows. Catalyzes the reversible cyclization of carbamoyl aspartate to dihydroorotate. The polypeptide is Dihydroorotase (Yersinia pseudotuberculosis serotype O:1b (strain IP 31758)).